A 334-amino-acid chain; its full sequence is Nucleoid-associated protein VS_0951 (334 aa).

The protein belongs to the YejK family.

The protein resides in the cytoplasm. It is found in the nucleoid. The sequence is that of Nucleoid-associated protein VS_0951 from Vibrio atlanticus (strain LGP32) (Vibrio splendidus (strain Mel32)).